Reading from the N-terminus, the 76-residue chain is Small ribosomal subunit protein bS18 (76 aa).

This sequence belongs to the bacterial ribosomal protein bS18 family. Part of the 30S ribosomal subunit. Forms a tight heterodimer with protein bS6.

In terms of biological role, binds as a heterodimer with protein bS6 to the central domain of the 16S rRNA, where it helps stabilize the platform of the 30S subunit. The sequence is that of Small ribosomal subunit protein bS18 from Marinomonas sp. (strain MWYL1).